Reading from the N-terminus, the 35-residue chain is Potassium channel toxin alpha-KTx 6.15 (35 aa).

4 disulfide bridges follow: C3–C24, C9–C29, C13–C31, and C19–C34.

It belongs to the short scorpion toxin superfamily. Potassium channel inhibitor family. Alpha-KTx 06 subfamily. Expressed by the venom gland.

The protein resides in the secreted. Functionally, blocks voltage-gated potassium channels rKv1.1/KCNA1 (IC(50)=13 nM), rKv1.2/KCNA2 (IC(50)=16 nM) and rKv1.3/KCNA3 (IC(50)=2 nM). This chain is Potassium channel toxin alpha-KTx 6.15, found in Hemiscorpius lepturus (Scorpion).